The following is a 430-amino-acid chain: Nucleoporin NUP42 (430 aa).

The disordered stretch occupies residues 1–68 (MSAFGNPFTS…AFGMPQFGTN (68 aa)). One copy of the SXFG 1 repeat lies at 2–5 (SAFG). Positions 15 to 36 (NLSNTSGINPFTNNAASTNNMG) are enriched in polar residues. 2 SAFGXPXFG repeats span residues 38–46 (SAFGRPSFG) and 58–66 (SAFGMPQFG). Low complexity predominate over residues 45 to 68 (FGTANTMTGGTTTSAFGMPQFGTN). The stretch at 78 to 81 (SAFG) is one SXFG 2 repeat. SAFGXPXFG repeat units lie at residues 90–98 (SAFGAPAFG) and 112–120 (SAFGAPSFG). Positions 121–230 (STGFGAMAAT…QNTSTSSGTG (110 aa)) are interactions with CRM1 and GFD1. 2 FG repeats span residues 124-125 (FG) and 134-135 (FG). Serine 137 carries the phosphoserine modification. One copy of the SAFGXPXFG 5 repeat lies at 143–151 (SAFGQPAFG). SXFG repeat units lie at residues 168-171 (SAFG) and 182-185 (SPFG). Residues 180 to 294 (TTSPFGSLQQ…QSPFSGGSGG (115 aa)) are disordered. Over residues 186–201 (SLQQNASQNASSTSSA) the composition is skewed to low complexity. The stretch at 200 to 208 (SAFGKPTFG) is one SAFGXPXFG 6 repeat. Over residues 209-230 (AATNTQSPFGTIQNTSTSSGTG) the composition is skewed to polar residues. 2 SXFG repeats span residues 215–218 (SPFG) and 232–235 (SPFG). Composition is skewed to polar residues over residues 237-252 (FGTN…NLQS) and 260-285 (PFGT…TNNQ). 2 SXFG repeats span residues 259–262 (SPFG) and 277–280 (SAFG). An FG 3 repeat occupies 296–297 (FG). Phosphoserine is present on serine 298. Residues 312–315 (SSFG) form an SXFG 9 repeat. 3 FG repeats span residues 319-322 (FSFG), 339-340 (FG), and 361-364 (FGFG). The interval 319 to 346 (FSFGITPQNDANKVSQSNPSFGQTMPNT) is disordered. Residues 323 to 346 (ITPQNDANKVSQSNPSFGQTMPNT) are compositionally biased toward polar residues. The tract at residues 365–430 (QQQMNATNVN…DIPPPPALVA (66 aa)) is interaction with GLE1.

As to quaternary structure, component of the nuclear pore complex (NPC). NPC constitutes the exclusive means of nucleocytoplasmic transport. NPCs allow the passive diffusion of ions and small molecules and the active, nuclear transport receptor-mediated bidirectional transport of macromolecules such as proteins, RNAs, ribonucleoparticles (RNPs), and ribosomal subunits across the nuclear envelope. Due to its 8-fold rotational symmetry, all subunits are present with 8 copies or multiples thereof. NUP42 interacts with the NUP82 subcomplex. It interacts directly with GLE1, and through its FG repeats with GFD1, the heterodimeric mRNA transport factor MEX67/MTR2, and the karyopherin CRM1.

The protein localises to the nucleus. It is found in the nuclear pore complex. It localises to the nucleus membrane. Functionally, functions as a component of the nuclear pore complex (NPC). NPC components, collectively referred to as nucleoporins (NUPs), can play the role of both NPC structural components and of docking or interaction partners for transiently associated nuclear transport factors. Active directional transport is assured by both, a Phe-Gly (FG) repeat affinity gradient for these transport factors across the NPC and a transport cofactor concentration gradient across the nuclear envelope (GSP1 and GSP2 GTPases associated predominantly with GTP in the nucleus, with GDP in the cytoplasm). NUP42 is specifically important for nuclear protein and mRNA export. This Saccharomyces cerevisiae (strain ATCC 204508 / S288c) (Baker's yeast) protein is Nucleoporin NUP42 (NUP42).